We begin with the raw amino-acid sequence, 453 residues long: Secreted triacylglycerol lipase LIP3 (453 aa).

An N-terminal signal peptide occupies residues 1-19 (MKLGIVAFTLISFAAQALA). An N-linked (GlcNAc...) asparagine glycan is attached at Asn-98. A disulfide bridge connects residues Cys-115 and Cys-284. The Nucleophile role is filled by Ser-197. A glycan (N-linked (GlcNAc...) asparagine) is linked at Asn-230. Active-site residues include Asp-344 and His-378. A disulfide bridge links Cys-360 with Cys-406.

Belongs to the AB hydrolase superfamily. Lipase family. Class Lip subfamily.

It is found in the secreted. It localises to the cell wall. The catalysed reaction is a triacylglycerol + H2O = a diacylglycerol + a fatty acid + H(+). The enzyme catalyses a monoacylglycerol + H2O = glycerol + a fatty acid + H(+). It catalyses the reaction a diacylglycerol + H2O = a monoacylglycerol + a fatty acid + H(+). Secreted lipase involved in Dandruff and seborrheic dermatitis (D/SD) probably via lipase-mediated breakdown of sebaceous lipids and release of irritating free fatty acids. Has triacylglycerol lipase activity and is able to hydrolyze triolein, tristearin, trilinolein, tripalmitoylglycerol and trihexadecenoin. Hydrolyzes diacylglycerols such as distearin, dilinolein, dipalmitoylglycerol and dipalmitolein. Mostly converts monoolein to di- and triolein, while free fatty acids are only produced in low amounts. This chain is Secreted triacylglycerol lipase LIP3, found in Malassezia globosa (strain ATCC MYA-4612 / CBS 7966) (Dandruff-associated fungus).